Here is a 505-residue protein sequence, read N- to C-terminus: T-cell activation inhibitor, mitochondrial (505 aa).

A coiled-coil region spans residues 216–243; the sequence is LKNSLPLRKELDRLKNELSELLQLSDIR.

Expressed in peripheral blood leukocytes, mainly in T-lymphocytes.

It localises to the mitochondrion. Its function is as follows. May regulate T-cell apoptosis. The sequence is that of T-cell activation inhibitor, mitochondrial (Tcaim) from Rattus norvegicus (Rat).